The primary structure comprises 681 residues: Glutamine--fructose-6-phosphate aminotransferase [isomerizing] 1 (681 aa).

Residue Cys-2 is the For GATase activity of the active site. Positions 2–287 (CGIFAYLNYH…DDDVAAVVDG (286 aa)) constitute a Glutamine amidotransferase type-2 domain. Residues Ser-103 and Ser-243 each carry the phosphoserine modification. The isomerase stretch occupies residues 295–662 (KRTARDHPGR…LQLLAFHLAV (368 aa)). 2 consecutive SIS domains span residues 359-498 (HIKE…DRIS) and 530-671 (LATE…VDFP). Residues 376–377 (TS), 421–423 (SQS), Thr-426, and His-577 each bind substrate.

Homotetramer, may also exist as homodimers.

The enzyme catalyses D-fructose 6-phosphate + L-glutamine = D-glucosamine 6-phosphate + L-glutamate. Its pathway is nucleotide-sugar biosynthesis; UDP-N-acetyl-alpha-D-glucosamine biosynthesis; alpha-D-glucosamine 6-phosphate from D-fructose 6-phosphate: step 1/1. Its activity is regulated as follows. Inhibited by 4,4'-dithiodipyridine. In terms of biological role, controls the flux of glucose into the hexosamine pathway. Most likely involved in regulating the availability of precursors for N- and O-linked glycosylation of proteins. Regulates the circadian expression of clock genes BMAL1 and CRY1. Has a role in fine tuning the metabolic fluctuations of cytosolic UDP-GlcNAc and its effects on hyaluronan synthesis that occur during tissue remodeling. The chain is Glutamine--fructose-6-phosphate aminotransferase [isomerizing] 1 (Gfpt1) from Rattus norvegicus (Rat).